The sequence spans 337 residues: Phenylalanine--tRNA ligase alpha subunit (337 aa).

A Mg(2+)-binding site is contributed by glutamate 252.

The protein belongs to the class-II aminoacyl-tRNA synthetase family. Phe-tRNA synthetase alpha subunit type 1 subfamily. As to quaternary structure, tetramer of two alpha and two beta subunits. The cofactor is Mg(2+).

The protein localises to the cytoplasm. The enzyme catalyses tRNA(Phe) + L-phenylalanine + ATP = L-phenylalanyl-tRNA(Phe) + AMP + diphosphate + H(+). In Cellvibrio japonicus (strain Ueda107) (Pseudomonas fluorescens subsp. cellulosa), this protein is Phenylalanine--tRNA ligase alpha subunit.